The chain runs to 390 residues: Dual-specificity RNA methyltransferase RlmN (390 aa).

The Proton acceptor role is filled by glutamate 111. One can recognise a Radical SAM core domain in the interval 117–356 (EDDRATLCVS…VIVRKTRGDD (240 aa)). The cysteines at positions 124 and 361 are disulfide-linked. [4Fe-4S] cluster is bound by residues cysteine 131, cysteine 135, and cysteine 138. Residues 185-186 (GE), serine 217, 239-241 (SLH), and asparagine 318 each bind S-adenosyl-L-methionine. The S-methylcysteine intermediate role is filled by cysteine 361.

It belongs to the radical SAM superfamily. RlmN family. The cofactor is [4Fe-4S] cluster.

Its subcellular location is the cytoplasm. The enzyme catalyses adenosine(2503) in 23S rRNA + 2 reduced [2Fe-2S]-[ferredoxin] + 2 S-adenosyl-L-methionine = 2-methyladenosine(2503) in 23S rRNA + 5'-deoxyadenosine + L-methionine + 2 oxidized [2Fe-2S]-[ferredoxin] + S-adenosyl-L-homocysteine. It catalyses the reaction adenosine(37) in tRNA + 2 reduced [2Fe-2S]-[ferredoxin] + 2 S-adenosyl-L-methionine = 2-methyladenosine(37) in tRNA + 5'-deoxyadenosine + L-methionine + 2 oxidized [2Fe-2S]-[ferredoxin] + S-adenosyl-L-homocysteine. Its function is as follows. Specifically methylates position 2 of adenine 2503 in 23S rRNA and position 2 of adenine 37 in tRNAs. m2A2503 modification seems to play a crucial role in the proofreading step occurring at the peptidyl transferase center and thus would serve to optimize ribosomal fidelity. This Edwardsiella ictaluri (strain 93-146) protein is Dual-specificity RNA methyltransferase RlmN.